The following is a 124-amino-acid chain: Holo-[acyl-carrier-protein] synthase (124 aa).

Positions 8 and 60 each coordinate Mg(2+).

The protein belongs to the P-Pant transferase superfamily. AcpS family. Mg(2+) is required as a cofactor.

It localises to the cytoplasm. It carries out the reaction apo-[ACP] + CoA = holo-[ACP] + adenosine 3',5'-bisphosphate + H(+). Its function is as follows. Transfers the 4'-phosphopantetheine moiety from coenzyme A to a Ser of acyl-carrier-protein. The protein is Holo-[acyl-carrier-protein] synthase of Wolbachia pipientis subsp. Culex pipiens (strain wPip).